The chain runs to 558 residues: uncharacterized protein (558 aa).

12 consecutive transmembrane segments (helical) span residues isoleucine 21–alanine 41, phenylalanine 69–valine 89, isoleucine 100–alanine 120, isoleucine 160–phenylalanine 180, alanine 220–isoleucine 240, glycine 251–tyrosine 271, valine 303–isoleucine 323, valine 386–isoleucine 406, threonine 413–phenylalanine 433, alanine 454–leucine 474, proline 479–serine 499, and alanine 519–valine 539.

This sequence belongs to the TrkH potassium transport family.

It localises to the cell membrane. This is an uncharacterized protein from Mycoplasma genitalium (strain ATCC 33530 / DSM 19775 / NCTC 10195 / G37) (Mycoplasmoides genitalium).